Consider the following 187-residue polypeptide: Alpha-D-galactose-binding lectin (187 aa).

Positions 1 to 37 (MTFAKQSCFNSIILLSIATSYFKIGHKISELGNRIEK) are cleaved as a signal peptide. At T39 the chain carries N-acetylthreonine. Residues 53–56 (HPKG), D64, 72–76 (DIHER), H101, G104, E112, 120–122 (DRH), H145, G148, E156, and 164–166 (DKH) contribute to the N-acetyl-alpha-D-galactosamine site.

As to quaternary structure, homodimer. In terms of tissue distribution, highest expression in the posterior part of the mantle. Highly expressed in gills and to a lesser extent in mid mantle and anterior muscle. Lowest expression in digestive gland and posterior adductor muscle. Scarcely detectable in hemocytes.

Its activity is regulated as follows. Agglutination of E.coli is inhibited by alpha-galactoside melibiose, but not by beta-galactoside lactose. Alpha-D-galactose-binding lectin. Binds D-GalNAc, but not glucose or its derivatives. Has hemagglutinating activity towards rabbit erythrocytes. Agglutinates bacteria. Has bacteriostatic activity on both Gram-positive and Gram-negative bacteria including B.subtilis, S.aureus, E.coli and V.parahaemolyticus, respectively. Has a dose-dependent cytotoxic effect on the human globotriaosylceramide (Gb3)-expressing Epstein-Barr virus (EBV)-positive Burkitt's lymphoma (Raji) cell line. Has dose-dependent cytotoxic effect on another Burkitt's lymphoma (Ramos) cell line, which does not possess the EBV genome, but also expresses Gb3. Binds to Gb3 in these cells leading to phosphorylation of MEK1/2, ERK1/2, JNK and p38 kinase, activation of caspase-9/3 and to expression of p21 and tumor necrosis factor (TNF)-alpha. No cytotoxic effect on the human chronic myelogenous leukemia (K-562) cell line, which does not express Gb3. May be involved in innate immunity acting as an antibacterial or antifungal agent. May be a pattern recognition receptor (PRR) involved in recognition of glycans found on parasitic or symbiotic microorganisms. In Mytilus galloprovincialis (Mediterranean mussel), this protein is Alpha-D-galactose-binding lectin.